The following is a 136-amino-acid chain: Ribosome-binding factor A (136 aa).

Belongs to the RbfA family. In terms of assembly, monomer. Binds 30S ribosomal subunits, but not 50S ribosomal subunits or 70S ribosomes.

It localises to the cytoplasm. Its function is as follows. One of several proteins that assist in the late maturation steps of the functional core of the 30S ribosomal subunit. Associates with free 30S ribosomal subunits (but not with 30S subunits that are part of 70S ribosomes or polysomes). Required for efficient processing of 16S rRNA. May interact with the 5'-terminal helix region of 16S rRNA. This chain is Ribosome-binding factor A, found in Yersinia pestis bv. Antiqua (strain Antiqua).